Here is an 87-residue protein sequence, read N- to C-terminus: Small ribosomal subunit protein bS20 (87 aa).

The disordered stretch occupies residues 1 to 21 (MANIKQQIKRNKTNEKRRLKN). The span at 7–20 (QIKRNKTNEKRRLK) shows a compositional bias: basic residues.

The protein belongs to the bacterial ribosomal protein bS20 family.

In terms of biological role, binds directly to 16S ribosomal RNA. This is Small ribosomal subunit protein bS20 from Phytoplasma mali (strain AT).